The following is a 572-amino-acid chain: Probable terpene synthase 13 (572 aa).

Residues Asp326, Asp330, and Glu478 each contribute to the Mg(2+) site. The DDXXD motif signature appears at 326–330 (DDIFD).

The protein belongs to the terpene synthase family. Requires Mg(2+) as cofactor.

Probable sesquiterpene synthase. This Ricinus communis (Castor bean) protein is Probable terpene synthase 13 (TPS13).